A 200-amino-acid polypeptide reads, in one-letter code: Guanylyl cyclase-activating protein 2 (200 aa).

Gly2 carries N-myristoyl glycine lipidation. EF-hand domains lie at 14–31 (GEID…FVME), 53–88 (EASQ…VLRG), 89–124 (TLEH…IYQL), and 141–176 (TPEE…DKWV). Positions 66, 68, 70, 72, 77, 102, 104, 106, 108, 113, 154, 156, 158, 160, and 165 each coordinate Ca(2+).

In terms of processing, the N-terminus is blocked. As to expression, in the retina, it is expressed in cone and rod photoreceptor cells.

The protein resides in the cell membrane. It is found in the photoreceptor inner segment. The protein localises to the cell projection. Its subcellular location is the cilium. It localises to the photoreceptor outer segment. In terms of biological role, stimulates two retinal guanylyl cyclases (GCs) GUCY2D and GUCY2F when free calcium ions concentration is low, and inhibits GUCY2D and GUCY2F when free calcium ions concentration is elevated. This Ca(2+)-sensitive regulation of GCs is a key event in recovery of the dark state of rod photoreceptors following light exposure. May be involved in cone photoreceptor response and recovery of response in bright light. In Homo sapiens (Human), this protein is Guanylyl cyclase-activating protein 2 (GUCA1B).